Consider the following 266-residue polypeptide: Thiazole synthase (266 aa).

K107 serves as the catalytic Schiff-base intermediate with DXP. Residues G168, 194–195 (AG), and 216–217 (NT) contribute to the 1-deoxy-D-xylulose 5-phosphate site.

Belongs to the ThiG family. Homotetramer. Forms heterodimers with either ThiH or ThiS.

The protein resides in the cytoplasm. The catalysed reaction is [ThiS sulfur-carrier protein]-C-terminal-Gly-aminoethanethioate + 2-iminoacetate + 1-deoxy-D-xylulose 5-phosphate = [ThiS sulfur-carrier protein]-C-terminal Gly-Gly + 2-[(2R,5Z)-2-carboxy-4-methylthiazol-5(2H)-ylidene]ethyl phosphate + 2 H2O + H(+). It functions in the pathway cofactor biosynthesis; thiamine diphosphate biosynthesis. Catalyzes the rearrangement of 1-deoxy-D-xylulose 5-phosphate (DXP) to produce the thiazole phosphate moiety of thiamine. Sulfur is provided by the thiocarboxylate moiety of the carrier protein ThiS. In vitro, sulfur can be provided by H(2)S. This chain is Thiazole synthase, found in Azorhizobium caulinodans (strain ATCC 43989 / DSM 5975 / JCM 20966 / LMG 6465 / NBRC 14845 / NCIMB 13405 / ORS 571).